Here is a 209-residue protein sequence, read N- to C-terminus: Ribosomal RNA large subunit methyltransferase E (209 aa).

Residues G63, W65, D83, D99, and D124 each coordinate S-adenosyl-L-methionine. K164 functions as the Proton acceptor in the catalytic mechanism.

This sequence belongs to the class I-like SAM-binding methyltransferase superfamily. RNA methyltransferase RlmE family.

The protein resides in the cytoplasm. It catalyses the reaction uridine(2552) in 23S rRNA + S-adenosyl-L-methionine = 2'-O-methyluridine(2552) in 23S rRNA + S-adenosyl-L-homocysteine + H(+). Its function is as follows. Specifically methylates the uridine in position 2552 of 23S rRNA at the 2'-O position of the ribose in the fully assembled 50S ribosomal subunit. In Yersinia enterocolitica serotype O:8 / biotype 1B (strain NCTC 13174 / 8081), this protein is Ribosomal RNA large subunit methyltransferase E.